A 185-amino-acid polypeptide reads, in one-letter code: Ribosome-recycling factor (185 aa).

The protein belongs to the RRF family.

Its subcellular location is the cytoplasm. Its function is as follows. Responsible for the release of ribosomes from messenger RNA at the termination of protein biosynthesis. May increase the efficiency of translation by recycling ribosomes from one round of translation to another. In Syntrophus aciditrophicus (strain SB), this protein is Ribosome-recycling factor.